The sequence spans 207 residues: Outer-membrane lipoprotein LolB (207 aa).

An N-terminal signal peptide occupies residues 1-26 (MSKLKIDTKRRFSLLIALVLIISLSS). Residue cysteine 27 is the site of N-palmitoyl cysteine attachment. Residue cysteine 27 is the site of S-diacylglycerol cysteine attachment.

The protein belongs to the LolB family. Monomer.

The protein resides in the cell outer membrane. Its function is as follows. Plays a critical role in the incorporation of lipoproteins in the outer membrane after they are released by the LolA protein. The chain is Outer-membrane lipoprotein LolB from Francisella tularensis subsp. tularensis (strain WY96-3418).